A 497-amino-acid chain; its full sequence is uncharacterized protein (497 aa).

2 consecutive ABC transporter domains span residues 9-247 and 256-496; these read VSVR…MGQA and ARPA…TGMA. Residue 41-48 coordinates ATP; it reads GGNGAGKS.

Belongs to the ABC transporter superfamily. Ribose importer (TC 3.A.1.2.1) family.

It is found in the cell membrane. Its function is as follows. Probably part of the binding-protein-dependent transport system y4mIJK. This system probably transports a sugar. Probably responsible for energy coupling to the transport system. This is an uncharacterized protein from Sinorhizobium fredii (strain NBRC 101917 / NGR234).